We begin with the raw amino-acid sequence, 571 residues long: Endonuclease/exonuclease/phosphatase family domain-containing protein 1 (571 aa).

Residues 1–20 form a disordered region; sequence MGSTLGCHRSIPRDPSDLSH. A lipid anchor (N-myristoyl glycine) is attached at G2. Over residues 11-20 the composition is skewed to basic and acidic residues; that stretch reads IPRDPSDLSH. Phosphoserine is present on residues S16, S21, and S25. In terms of domain architecture, HhH spans 38–67; the sequence is ERLNINTATEEELMTLPGVTRAVARSIVEY. Residues S106, S110, S162, and S175 each carry the phosphoserine modification. The segment at 202–227 is disordered; that stretch reads SRPPSTHTNGGLTFTAKPHPSPTSLS. Residues 204–213 are compositionally biased toward polar residues; it reads PPSTHTNGGL. Phosphothreonine is present on T267. S430 carries the post-translational modification Phosphoserine. Residues 548–571 are disordered; the sequence is RKEGPRSGNGLTLERSEANIKHER. Positions 561–571 are enriched in basic and acidic residues; sequence ERSEANIKHER.

This Bos taurus (Bovine) protein is Endonuclease/exonuclease/phosphatase family domain-containing protein 1 (EEPD1).